A 376-amino-acid chain; its full sequence is Heat-inducible transcription repressor HrcA (376 aa).

The protein belongs to the HrcA family.

Functionally, negative regulator of class I heat shock genes (grpE-dnaK-dnaJ and groELS operons). Prevents heat-shock induction of these operons. The polypeptide is Heat-inducible transcription repressor HrcA (Nostoc punctiforme (strain ATCC 29133 / PCC 73102)).